A 510-amino-acid chain; its full sequence is NAD(P)H-quinone oxidoreductase subunit 2 B, chloroplastic (510 aa).

The next 13 membrane-spanning stretches (helical) occupy residues 24–44, 57–77, 99–119, 124–144, 149–169, 183–203, 227–247, 295–315, 323–343, 354–374, 395–415, 428–448, and 484–504; these read LLLFDGSLIFPECILIFGLIL, LPWFYFISSTSLVMSITALLF, IFQFLILLCSTLCIPLSVEYI, MAITEFLLFVLTATLGGMFLC, LITIFVAPECFSFCSYLLSGY, YLLMGGASSSILVHAFSWLYG, PGISIALLFITVGIGFKLSPA, WHLLLEILAILSMILGNIIAI, MLAYSSIGQIGYVIIGIIVGD, YMLFYISMNLGTFACIVLFGL, ALSLALCLLSLGGLPPLAGFF, GLYSLVLIGLLTSVVSIYYYL, and MIVCVIASTIPGISMNPIIAI.

It belongs to the complex I subunit 2 family. In terms of assembly, NDH is composed of at least 16 different subunits, 5 of which are encoded in the nucleus.

Its subcellular location is the plastid. It is found in the chloroplast thylakoid membrane. The enzyme catalyses a plastoquinone + NADH + (n+1) H(+)(in) = a plastoquinol + NAD(+) + n H(+)(out). It carries out the reaction a plastoquinone + NADPH + (n+1) H(+)(in) = a plastoquinol + NADP(+) + n H(+)(out). NDH shuttles electrons from NAD(P)H:plastoquinone, via FMN and iron-sulfur (Fe-S) centers, to quinones in the photosynthetic chain and possibly in a chloroplast respiratory chain. The immediate electron acceptor for the enzyme in this species is believed to be plastoquinone. Couples the redox reaction to proton translocation, and thus conserves the redox energy in a proton gradient. The sequence is that of NAD(P)H-quinone oxidoreductase subunit 2 B, chloroplastic from Jasminum nudiflorum (Winter jasmine).